A 523-amino-acid chain; its full sequence is uncharacterized protein (523 aa).

A Radical SAM core domain is found at 193-447 (RKCSGCGNCR…ALKRRMIGKR (255 aa)). Cys212, Cys220, and Cys223 together coordinate [4Fe-4S] cluster.

[4Fe-4S] cluster is required as a cofactor.

This is an uncharacterized protein from Methanopyrus kandleri (strain AV19 / DSM 6324 / JCM 9639 / NBRC 100938).